Here is a 708-residue protein sequence, read N- to C-terminus: Leucine-rich repeat neuronal protein 3 (708 aa).

The signal sequence occupies residues Met1–Ala22. Residues Val23–Ala69 form the LRRNT domain. Topologically, residues Val23–Thr628 are extracellular. LRR repeat units lie at residues Asn70 to Pro91, Asn93 to Lys114, Gln117 to Glu138, Asn141 to Gly162, Asn165 to Ala186, Asn189 to Pro210, Asn213 to Gly234, Asn237 to Lys258, Asn261 to Asn282, His285 to Ala304, Asp310 to Arg332, and Lys335 to Pro358. N-linked (GlcNAc...) asparagine glycans are attached at residues Asn93 and Asn103. An N-linked (GlcNAc...) asparagine glycan is attached at Asn223. The 54-residue stretch at Asn368–Pro421 folds into the LRRCT domain. An N-linked (GlcNAc...) asparagine glycan is attached at Asn382. The Ig-like C2-type domain occupies Pro421 to Asp514. An intrachain disulfide couples Cys444 to Cys496. N-linked (GlcNAc...) asparagine glycosylation is found at Asn522, Asn579, Asn608, and Asn625. A Fibronectin type-III domain is found at Gly523 to Asp617. The chain crosses the membrane as a helical span at residues Leu629–Leu649. The Cytoplasmic segment spans residues Ser650–Ser708.

Its subcellular location is the membrane. This Pongo abelii (Sumatran orangutan) protein is Leucine-rich repeat neuronal protein 3 (LRRN3).